Here is a 179-residue protein sequence, read N- to C-terminus: UPF0398 protein Bsph_0756 (179 aa).

The protein belongs to the UPF0398 family.

The polypeptide is UPF0398 protein Bsph_0756 (Lysinibacillus sphaericus (strain C3-41)).